Reading from the N-terminus, the 315-residue chain is Cobalamin biosynthesis protein CobD (315 aa).

Helical transmembrane passes span 54–74 (GLLF…ILFL), 78–98 (IAYW…LAMT), 152–172 (ADGV…LALM), 203–223 (IANF…SFIL), and 295–315 (LLYT…LLLF).

It belongs to the CobD/CbiB family.

It localises to the cell membrane. It functions in the pathway cofactor biosynthesis; adenosylcobalamin biosynthesis. Converts cobyric acid to cobinamide by the addition of aminopropanol on the F carboxylic group. This Listeria monocytogenes serotype 4b (strain F2365) protein is Cobalamin biosynthesis protein CobD.